Reading from the N-terminus, the 140-residue chain is L-fucose mutarotase (140 aa).

Catalysis depends on His-22, which acts as the Proton donor. Residues Asp-30, Arg-107, and 129–131 contribute to the substrate site; that span reads YGN.

Belongs to the RbsD / FucU family. FucU mutarotase subfamily. As to quaternary structure, homodecamer.

The protein resides in the cytoplasm. It carries out the reaction alpha-L-fucose = beta-L-fucose. Its pathway is carbohydrate metabolism; L-fucose metabolism. Its function is as follows. Involved in the anomeric conversion of L-fucose. In Salmonella arizonae (strain ATCC BAA-731 / CDC346-86 / RSK2980), this protein is L-fucose mutarotase.